A 221-amino-acid chain; its full sequence is 2-amino-5-formylamino-6-ribosylaminopyrimidin-4(3H)-one 5'-monophosphate deformylase (221 aa).

Fe cation contacts are provided by Glu29, His31, Asp40, and His108.

This sequence belongs to the creatininase superfamily. FAPy deformylase family. As to quaternary structure, homodimer. Fe(2+) is required as a cofactor. The cofactor is Zn(2+).

The enzyme catalyses 2-amino-5-formylamino-6-(5-phospho-D-ribosylamino)pyrimidin-4(3H)-one + H2O = 2,5-diamino-6-(1-D-ribosylamino)pyrimidin-4(3H)-one 5'-phosphate + formate + H(+). It participates in cofactor biosynthesis; coenzyme F420 biosynthesis. The protein operates within cofactor biosynthesis; riboflavin biosynthesis. Its function is as follows. Catalyzes the hydrolysis of the formamide of 2-amino-5-formylamino-6-ribosylamino-4(3H)-pyrimidinone 5'-monophosphate (FAPy) to form 2,5-diamino-6-ribosylamino-4(3H)-pyrimidinone 5'-phosphate (APy). The protein is 2-amino-5-formylamino-6-ribosylaminopyrimidin-4(3H)-one 5'-monophosphate deformylase of Methanococcus maripaludis (strain C5 / ATCC BAA-1333).